The following is a 579-amino-acid chain: Polyadenylate-binding protein, cytoplasmic and nuclear (579 aa).

Residues 1–10 are compositionally biased toward basic and acidic residues; that stretch reads MADITEKTAE. The disordered stretch occupies residues 1 to 32; it reads MADITEKTAEQLENLSLQDKQEGTNEENQSET. 4 RRM domains span residues 35–113, 123–200, 216–293, and 319–396; these read ASLY…WSQR, GNIF…PHLS, TNVY…RAQK, and INLF…IAQR. One can recognise a PABC domain in the interval 487-566; it reads GFARNGPAAN…ASAAYESFKQ (80 aa). The interval 560 to 579 is disordered; the sequence is AYESFKQEQQQPQGEEAQQA. Over residues 566–579 the composition is skewed to low complexity; the sequence is QEQQQPQGEEAQQA.

This sequence belongs to the polyadenylate-binding protein type-1 family.

It is found in the cytoplasm. Its subcellular location is the nucleus. Its function is as follows. Binds the poly(A) tail of mRNA. Appears to be an important mediator of the multiple roles of the poly(A) tail in mRNA biogenesis, stability and translation. In the nucleus, involved in both mRNA cleavage and polyadenylation. Is also required for efficient mRNA export to the cytoplasm. Acts in concert with a poly(A)-specific nuclease (PAN) to affect poly(A) tail shortening, which may occur concomitantly with either nucleocytoplasmic mRNA transport or translational initiation. In the cytoplasm, stimulates translation initiation and regulates mRNA decay through translation termination-coupled poly(A) shortening, probably mediated by PAN. The sequence is that of Polyadenylate-binding protein, cytoplasmic and nuclear (PAB1) from Candida glabrata (strain ATCC 2001 / BCRC 20586 / JCM 3761 / NBRC 0622 / NRRL Y-65 / CBS 138) (Yeast).